A 201-amino-acid polypeptide reads, in one-letter code: Holliday junction branch migration complex subunit RuvA (201 aa).

The domain I stretch occupies residues 1–64 (MYEYIKGKYI…QDFIGLYGFL (64 aa)). Positions 65–143 (TKDELEMFNK…STDISKGNSE (79 aa)) are domain II. The segment at 144–154 (INNLDVDYDEH) is flexible linker. The interval 154–201 (HSKKLEEVRFALNSLGYSEKETDRAINNVDKSEGIENIIKSCLRFLMN) is domain III.

This sequence belongs to the RuvA family. Homotetramer. Forms an RuvA(8)-RuvB(12)-Holliday junction (HJ) complex. HJ DNA is sandwiched between 2 RuvA tetramers; dsDNA enters through RuvA and exits via RuvB. An RuvB hexamer assembles on each DNA strand where it exits the tetramer. Each RuvB hexamer is contacted by two RuvA subunits (via domain III) on 2 adjacent RuvB subunits; this complex drives branch migration. In the full resolvosome a probable DNA-RuvA(4)-RuvB(12)-RuvC(2) complex forms which resolves the HJ.

It localises to the cytoplasm. In terms of biological role, the RuvA-RuvB-RuvC complex processes Holliday junction (HJ) DNA during genetic recombination and DNA repair, while the RuvA-RuvB complex plays an important role in the rescue of blocked DNA replication forks via replication fork reversal (RFR). RuvA specifically binds to HJ cruciform DNA, conferring on it an open structure. The RuvB hexamer acts as an ATP-dependent pump, pulling dsDNA into and through the RuvAB complex. HJ branch migration allows RuvC to scan DNA until it finds its consensus sequence, where it cleaves and resolves the cruciform DNA. This chain is Holliday junction branch migration complex subunit RuvA, found in Clostridium acetobutylicum (strain ATCC 824 / DSM 792 / JCM 1419 / IAM 19013 / LMG 5710 / NBRC 13948 / NRRL B-527 / VKM B-1787 / 2291 / W).